Consider the following 618-residue polypeptide: Serine/threonine-protein kinase TNNI3K (618 aa).

G2 carries N-myristoyl glycine lipidation. A coiled-coil region spans residues 21–51 (SESYVITIERLEDDLKIKEKELTELRNIFGS). ANK repeat units follow at residues 66–96 (NGLS…RPSR), 100–129 (NGFT…DIQQ), 133–162 (GGLT…NVNI), 166–195 (VFFT…DVNV), 199–228 (VGDR…KADV), 234–263 (EDHV…EVQP), 269–298 (YGDT…TESL), 304–335 (FSET…NINH), 339–368 (DGHT…DMNL), and 381–410 (DEQT…PQDE). The Protein kinase domain maps to 463–618 (IEFHEIIGSG…TAHTIYLLAP (156 aa)). Residues 469–477 (IGSGSFGKV) and K490 each bind ATP. Catalysis depends on D588, which acts as the Proton acceptor.

The protein belongs to the protein kinase superfamily. TKL Ser/Thr protein kinase family. MAP kinase kinase kinase subfamily. As to quaternary structure, interacts with TNNI3, ACTC, ACTA1, MYBPC3, AIP, FABP3 and HADHB. It depends on Mg(2+) as a cofactor. Post-translationally, autophosphorylated.

The protein resides in the nucleus. It is found in the cytoplasm. It catalyses the reaction L-seryl-[protein] + ATP = O-phospho-L-seryl-[protein] + ADP + H(+). The catalysed reaction is L-threonyl-[protein] + ATP = O-phospho-L-threonyl-[protein] + ADP + H(+). Its function is as follows. May play a role in cardiac physiology. The sequence is that of Serine/threonine-protein kinase TNNI3K from Pongo abelii (Sumatran orangutan).